Reading from the N-terminus, the 29-residue chain is Potassium channel toxin alpha-KTx 8.3 (29 aa).

3 cysteine pairs are disulfide-bonded: cysteine 3–cysteine 19, cysteine 6–cysteine 24, and cysteine 10–cysteine 26.

This sequence belongs to the short scorpion toxin superfamily. Potassium channel inhibitor family. Alpha-KTx 08 subfamily. As to expression, expressed by the venom gland.

The protein localises to the secreted. Functionally, specific and potent inhibitor of ClC-2/CLCN2 chloride channel. It slows ClC-2/CLCN2 activation by increasing the latency to first opening by nearly 8-fold but is unable to inhibit open channels, suggesting that this toxin inhibits channel activation gating. This chain is Potassium channel toxin alpha-KTx 8.3, found in Leiurus hebraeus (Hebrew deathstalker scorpion).